Consider the following 104-residue polypeptide: Large ribosomal subunit protein uL24 (104 aa).

The protein belongs to the universal ribosomal protein uL24 family. In terms of assembly, part of the 50S ribosomal subunit.

One of two assembly initiator proteins, it binds directly to the 5'-end of the 23S rRNA, where it nucleates assembly of the 50S subunit. Its function is as follows. One of the proteins that surrounds the polypeptide exit tunnel on the outside of the subunit. The sequence is that of Large ribosomal subunit protein uL24 from Escherichia coli O81 (strain ED1a).